The chain runs to 319 residues: Formimidoylglutamase (319 aa).

Residues asparagine 127, aspartate 150, histidine 152, aspartate 154, aspartate 242, and aspartate 244 each contribute to the Mn(2+) site.

This sequence belongs to the arginase family. Requires Mn(2+) as cofactor.

It carries out the reaction N-formimidoyl-L-glutamate + H2O = formamide + L-glutamate. It participates in amino-acid degradation; L-histidine degradation into L-glutamate; L-glutamate from N-formimidoyl-L-glutamate (hydrolase route): step 1/1. Functionally, catalyzes the conversion of N-formimidoyl-L-glutamate to L-glutamate and formamide. This chain is Formimidoylglutamase, found in Bacillus subtilis (strain 168).